Here is a 243-residue protein sequence, read N- to C-terminus: tRNA pseudouridine synthase A (243 aa).

Aspartate 53 functions as the Nucleophile in the catalytic mechanism. Tyrosine 111 is a binding site for substrate.

It belongs to the tRNA pseudouridine synthase TruA family. In terms of assembly, homodimer.

The enzyme catalyses uridine(38/39/40) in tRNA = pseudouridine(38/39/40) in tRNA. In terms of biological role, formation of pseudouridine at positions 38, 39 and 40 in the anticodon stem and loop of transfer RNAs. This chain is tRNA pseudouridine synthase A, found in Pelodictyon phaeoclathratiforme (strain DSM 5477 / BU-1).